Reading from the N-terminus, the 134-residue chain is Profilin-3 (134 aa).

Cys13 and Cys118 form a disulfide bridge. The short motif at 84-100 (AVIRGKKGSGGITIKKT) is the Involved in PIP2 interaction element. At Thr114 the chain carries Phosphothreonine.

The protein belongs to the profilin family. As to quaternary structure, occurs in many kinds of cells as a complex with monomeric actin in a 1:1 ratio. Post-translationally, phosphorylated by MAP kinases.

The protein localises to the cytoplasm. It localises to the cytoskeleton. In terms of biological role, binds to actin and affects the structure of the cytoskeleton. At high concentrations, profilin prevents the polymerization of actin, whereas it enhances it at low concentrations. This Olea europaea (Common olive) protein is Profilin-3.